The following is a 312-amino-acid chain: Taste receptor type 2 member 7 (312 aa).

Residues 1–9 (MTYETDTTL) are Extracellular-facing. Residues 10 to 30 (MLVAVGEALVGILGNAFIALV) form a helical membrane-spanning segment. Residues 31-49 (NFMGWMKNRKIASIDLILS) lie on the Cytoplasmic side of the membrane. A helical membrane pass occupies residues 50-70 (SVAMSRICLQCIILLDCIILV). Residues 71–101 (QYPDTYNRGKEMRTVDFFWTLTNHLSVWFAT) lie on the Extracellular side of the membrane. Residues 102-122 (CLSIFYLFKIANFFHPLFLWI) form a helical membrane-spanning segment. The Cytoplasmic segment spans residues 123 to 128 (KWRIDK). The helical transmembrane segment at 129–149 (LILRTLLACVIISLCFSLPVT) threads the bilayer. Residues 150 to 187 (ENLSDDFRRCVKTKERINSTLRCKVNKAGHASVKVNLN) are Extracellular-facing. N-linked (GlcNAc...) asparagine glycans are attached at residues Asn151 and Asn167. A helical membrane pass occupies residues 188–208 (LVMLFPFSVSLVSFLLLILSL). At 209–235 (WRHTRQIQLSVTGYKDPSTTAHVKAMK) the chain is on the cytoplasmic side. A helical transmembrane segment spans residues 236–256 (AVISFLALFVVYCLAFLIATS). At 257-266 (SYFMPESELA) the chain is on the extracellular side. The helical transmembrane segment at 267 to 287 (VIWGELIALIYPSSHSFILIL) threads the bilayer. The Cytoplasmic segment spans residues 288–312 (GSSKLKQASVRVLCRVKTMLKGKKY).

This sequence belongs to the G-protein coupled receptor T2R family. Expressed in subsets of taste receptor cells of the tongue and palate epithelium and exclusively in gustducin-positive cells. Expressed in 15% taste bud cells in circumvallate and foliate papillae but only in 2% in fungiform papillae. Expressed in gastric and duodenal tissues.

The protein resides in the membrane. Functionally, gustducin-coupled receptor implicated in the perception of bitter compounds in the oral cavity and the gastrointestinal tract. Signals through PLCB2 and the calcium-regulated cation channel TRPM5. The sequence is that of Taste receptor type 2 member 7 (Tas2r7) from Mus musculus (Mouse).